A 172-amino-acid chain; its full sequence is Nicotinamide-nucleotide adenylyltransferase (172 aa).

This sequence belongs to the archaeal NMN adenylyltransferase family.

It is found in the cytoplasm. It carries out the reaction beta-nicotinamide D-ribonucleotide + ATP + H(+) = diphosphate + NAD(+). It participates in cofactor biosynthesis; NAD(+) biosynthesis; NAD(+) from nicotinamide D-ribonucleotide: step 1/1. In Aeropyrum pernix (strain ATCC 700893 / DSM 11879 / JCM 9820 / NBRC 100138 / K1), this protein is Nicotinamide-nucleotide adenylyltransferase.